Here is a 726-residue protein sequence, read N- to C-terminus: MAVGEPLVHIRVTLLLLWFGMFLSISGHSQARPSQYFTSPEVVIPLKVISRGRGAKAPGWLSYSLRFGGQRYIVHMRVNKLLFAAHLPVFTYTEQHALLQDQPFIQDDCYYHGYVEGVPESLVALSTCSGGFLGMLQINDLVYEIKPISVSATFEHLVYKIDSDDTQFPPMRCGLTEEKIAHQMELQLSYNFTLKQSSFVGWWTHQRFVELVVVVDNIRYLFSQSNATTVQHEVFNVVNIVDSFYHPLEVDVILTGIDIWTASNPLPTSGDLDNVLEDFSIWKNYNLNNRLQHDVAHLFIKDTQGMKLGVAYVKGICQNPFNTGVDVFEDNRLVVFAITLGHELGHNLGMQHDTQWCVCELQWCIMHAYRKVTTKFSNCSYAQYWDSTISSGLCIQPPPYPGNIFRLKYCGNLVVEEGEECDCGTIRQCAKDPCCLLNCTLHPGAACAFGICCKDCKFLPSGTLCRQQVGECDLPEWCNGTSHQCPDDVYVQDGISCNVNAFCYEKTCNNHDIQCKEIFGQDARSASQSCYQEINTQGNRFGHCGIVGTTYVKCWTPDIMCGRVQCENVGVIPNLIEHSTVQQFHLNDTTCWGTDYHLGMAIPDIGEVKDGTVCGPEKICIRKKCASMVHLSQACQPKTCNMRGICNNKQHCHCNHEWAPPYCKDKGYGGSADSGPPPKNNMEGLNVMGKLRYLSLLCLLPLVAFLLFCLHVLFKKRTKSKEDEEG.

Positions 1-31 (MAVGEPLVHIRVTLLLLWFGMFLSISGHSQA) are cleaved as a signal peptide. Residues 32–206 (RPSQYFTSPE…SSFVGWWTHQ (175 aa)) constitute a propeptide that is removed on maturation. The Cysteine switch motif lies at 171–178 (MRCGLTEE). Zn(2+) is bound at residue cysteine 173. Asparagine 191 and asparagine 226 each carry an N-linked (GlcNAc...) asparagine glycan. The Peptidase M12B domain occupies 207–400 (RFVELVVVVD…SGLCIQPPPY (194 aa)). At 207-693 (RFVELVVVVD…GLNVMGKLRY (487 aa)) the chain is on the extracellular side. Disulfide bonds link cysteine 317–cysteine 394, cysteine 357–cysteine 379, and cysteine 359–cysteine 364. Histidine 342 contributes to the Zn(2+) binding site. Residue glutamate 343 is part of the active site. Zn(2+) contacts are provided by histidine 346 and histidine 352. Residues asparagine 378, asparagine 438, asparagine 479, and asparagine 587 are each glycosylated (N-linked (GlcNAc...) asparagine). A Disintegrin domain is found at 407 to 493 (LKYCGNLVVE…QCPDDVYVQD (87 aa)). A disulfide bond links cysteine 465 and cysteine 485. 3 disulfide bridges follow: cysteine 635/cysteine 646, cysteine 640/cysteine 652, and cysteine 654/cysteine 663. The EGF-like domain maps to 635-663 (CQPKTCNMRGICNNKQHCHCNHEWAPPYC). Residues 694–714 (LSLLCLLPLVAFLLFCLHVLF) traverse the membrane as a helical segment. At 715–726 (KKRTKSKEDEEG) the chain is on the cytoplasmic side.

It depends on Zn(2+) as a cofactor. In terms of processing, has no obvious cleavage site for furin endopeptidase, suggesting that the proteolytic processing is regulated. In terms of tissue distribution, testis specific.

Its subcellular location is the membrane. Its function is as follows. May be involved in sperm maturation and/or fertilization. This is Disintegrin and metalloproteinase domain-containing protein 20 (ADAM20) from Homo sapiens (Human).